The following is a 491-amino-acid chain: Pentatricopeptide repeat-containing protein At5g27460 (491 aa).

10 PPR repeats span residues 69 to 99, 105 to 139, 142 to 176, 177 to 211, 212 to 246, 248 to 278, 283 to 313, 318 to 348, 353 to 387, and 388 to 426; these read SLSE…MENQ, SVYD…SVSM, AKSA…GFLV, TPHP…KIPR, NVLS…KSVE, GWSS…AEKM, NRLG…SKSV, SCVN…WEAQ, DVRV…GGTP, and NYKT…HWRP.

Belongs to the PPR family. P subfamily.

The protein is Pentatricopeptide repeat-containing protein At5g27460 of Arabidopsis thaliana (Mouse-ear cress).